The following is a 202-amino-acid chain: Imidazoleglycerol-phosphate dehydratase (202 aa).

Belongs to the imidazoleglycerol-phosphate dehydratase family.

Its subcellular location is the cytoplasm. The catalysed reaction is D-erythro-1-(imidazol-4-yl)glycerol 3-phosphate = 3-(imidazol-4-yl)-2-oxopropyl phosphate + H2O. Its pathway is amino-acid biosynthesis; L-histidine biosynthesis; L-histidine from 5-phospho-alpha-D-ribose 1-diphosphate: step 6/9. This chain is Imidazoleglycerol-phosphate dehydratase, found in Sinorhizobium fredii (strain NBRC 101917 / NGR234).